The chain runs to 318 residues: NADH-ubiquinone oxidoreductase chain 1 (318 aa).

8 consecutive transmembrane segments (helical) span residues 3–23, 70–90, 100–120, 146–166, 171–191, 231–251, 254–273, and 294–314; these read FINI…LTLV, LFII…IPLP, LGML…LWSG, MAII…QMLI, HIWL…STLA, IILM…HINY, LYST…FLWI, and LPLT…LAGI.

This sequence belongs to the complex I subunit 1 family. Core subunit of respiratory chain NADH dehydrogenase (Complex I) which is composed of 45 different subunits.

The protein resides in the mitochondrion inner membrane. It carries out the reaction a ubiquinone + NADH + 5 H(+)(in) = a ubiquinol + NAD(+) + 4 H(+)(out). Its function is as follows. Core subunit of the mitochondrial membrane respiratory chain NADH dehydrogenase (Complex I) which catalyzes electron transfer from NADH through the respiratory chain, using ubiquinone as an electron acceptor. Essential for the catalytic activity and assembly of complex I. This is NADH-ubiquinone oxidoreductase chain 1 from Rattus norvegicus (Rat).